The following is a 704-amino-acid chain: Glycine--tRNA ligase beta subunit (704 aa).

This sequence belongs to the class-II aminoacyl-tRNA synthetase family. As to quaternary structure, tetramer of two alpha and two beta subunits.

The protein resides in the cytoplasm. It catalyses the reaction tRNA(Gly) + glycine + ATP = glycyl-tRNA(Gly) + AMP + diphosphate. The chain is Glycine--tRNA ligase beta subunit from Rhizobium johnstonii (strain DSM 114642 / LMG 32736 / 3841) (Rhizobium leguminosarum bv. viciae).